The chain runs to 255 residues: Imidazole glycerol phosphate synthase subunit HisF (255 aa).

Active-site residues include D11 and D130.

Belongs to the HisA/HisF family. In terms of assembly, heterodimer of HisH and HisF.

The protein resides in the cytoplasm. It carries out the reaction 5-[(5-phospho-1-deoxy-D-ribulos-1-ylimino)methylamino]-1-(5-phospho-beta-D-ribosyl)imidazole-4-carboxamide + L-glutamine = D-erythro-1-(imidazol-4-yl)glycerol 3-phosphate + 5-amino-1-(5-phospho-beta-D-ribosyl)imidazole-4-carboxamide + L-glutamate + H(+). It functions in the pathway amino-acid biosynthesis; L-histidine biosynthesis; L-histidine from 5-phospho-alpha-D-ribose 1-diphosphate: step 5/9. IGPS catalyzes the conversion of PRFAR and glutamine to IGP, AICAR and glutamate. The HisF subunit catalyzes the cyclization activity that produces IGP and AICAR from PRFAR using the ammonia provided by the HisH subunit. The chain is Imidazole glycerol phosphate synthase subunit HisF from Exiguobacterium sp. (strain ATCC BAA-1283 / AT1b).